Reading from the N-terminus, the 281-residue chain is MAGITSTVGFNAILAGATKTVSHPVKSKLFGLRLCVPEFSIVSLSPYHHRRCPAITCRYGGGGGGGSRFPGDRRGRQKESEDDDSLDISAIRSATVRLIDDQQNMIGLVSKEEAVRRAEDAELDLVILSPDADPPVVRMMDYSKYRYEQQKRKKEQQKKTTRMDLKELKMGYNIDQHDYSVRMRAARKFLQDGDKVKVIVNMKGRENEFRNIAIELLRRFQTEIGELGTEESKNFRDRNLFIVLVPNKEVIRKVQEPPPKKKKKPADDKVSAANITATQDI.

A chloroplast-targeting transit peptide spans 1–51; the sequence is MAGITSTVGFNAILAGATKTVSHPVKSKLFGLRLCVPEFSIVSLSPYHHRR. Disordered stretches follow at residues 63–86 and 253–281; these read GGGGSRFPGDRRGRQKESEDDDSL and KVQEPPPKKKKKPADDKVSAANITATQDI. 2 stretches are compositionally biased toward basic and acidic residues: residues 70 to 79 and 253 to 270; these read PGDRRGRQKE and KVQEPPPKKKKKPADDKV.

The protein belongs to the IF-3 family. As to quaternary structure, monomer.

The protein resides in the plastid. It localises to the chloroplast. Functionally, chloroplast translation initiation factor that is essential for the coordination of leaf and chloroplast development. IF-3 binds to the 30S ribosomal subunit and shifts the equilibrium between 70S ribosomes and their 50S and 30S subunits in favor of the free subunits, thus enhancing the availability of 30S subunits on which protein synthesis initiation begins. This Arabidopsis thaliana (Mouse-ear cress) protein is Translation initiation factor IF3-4, chloroplastic.